A 351-amino-acid chain; its full sequence is Ion-translocating oxidoreductase complex subunit D (351 aa).

4 helical membrane-spanning segments follow: residues 18-38 (IMLL…YFFG), 40-60 (GSLI…GAVL), 87-107 (LPPL…IVIA), and 121-141 (PAMV…TSWL). Position 185 is an FMN phosphoryl threonine (T185). Helical transmembrane passes span 211-231 (VLAG…GLLL), 241-261 (IPVS…MIAP), 264-284 (FASP…FFIA), 298-318 (LIFG…GGYP), and 320-340 (GVAF…HYTQ).

It belongs to the NqrB/RnfD family. The complex is composed of six subunits: RnfA, RnfB, RnfC, RnfD, RnfE and RnfG. Requires FMN as cofactor.

It localises to the cell inner membrane. Part of a membrane-bound complex that couples electron transfer with translocation of ions across the membrane. The polypeptide is Ion-translocating oxidoreductase complex subunit D (Yersinia pseudotuberculosis serotype O:1b (strain IP 31758)).